The chain runs to 774 residues: Penicillin acylase 2 proenzyme (774 aa).

Ser-240 acts as the Nucleophile in catalysis.

The protein belongs to the peptidase S45 family. Heterodimer of a small subunit and a large subunit processed from the same precursor.

The enzyme catalyses a penicillin + H2O = 6-aminopenicillanate + a carboxylate. This Pseudomonas sp. (strain SE83) protein is Penicillin acylase 2 proenzyme (acyII).